We begin with the raw amino-acid sequence, 276 residues long: MALLEVCGAPRGLRKACAVPALGSQLRSDPGHYSFSLRAPELAVPRGMQPTEFFQSLGENGEKNIRKEMVHGTTTLAFKFQHGVIVAVDSRATAGNYISSSRVNKVIEINPSLLGTMSGCAADCQYWERLLAKECRLYYLRNGERISVSAASKLLSNMVYQYRGMDLSMGSMICGWDKKGPGLYYVDQNGTRLSGNMFSTGSGSTYAYGVMDSGYQPSLSPEEAYELGRRAITYATHRDSYSGGIINMYHMKEDGWVKVESTDVNELLHQYQEANQ.

Positions 1–72 (MALLEVCGAP…KNIRKEMVHG (72 aa)) are cleaved as a propeptide — removed in mature form. The active-site Nucleophile is T73.

The protein belongs to the peptidase T1B family. In terms of assembly, the 26S proteasome consists of a 20S proteasome core and two 19S regulatory subunits. The 20S proteasome core is composed of 28 subunits that are arranged in four stacked rings, resulting in a barrel-shaped structure. The two end rings are each formed by seven alpha subunits, and the two central rings are each formed by seven beta subunits. The catalytic chamber with the active sites is on the inside of the barrel. Component of the immunoproteasome, where it displaces the equivalent housekeeping subunit PSMB5. Component of the spermatoproteasome, a form of the proteasome specifically found in testis. Directly interacts with POMP. Post-translationally, autocleaved. The resulting N-terminal Thr residue of the mature subunit is responsible for the nucleophile proteolytic activity.

The protein localises to the cytoplasm. The protein resides in the nucleus. It carries out the reaction Cleavage of peptide bonds with very broad specificity.. The proteasome is a multicatalytic proteinase complex which is characterized by its ability to cleave peptides with Arg, Phe, Tyr, Leu, and Glu adjacent to the leaving group at neutral or slightly basic pH. The proteasome has an ATP-dependent proteolytic activity. This subunit is involved in antigen processing to generate class I binding peptides. May participate in the generation of spliced peptides resulting from the ligation of two separate proteasomal cleavage products that are not contiguous in the parental protein. Required for adipocyte differentiation. This is Proteasome subunit beta type-8 (PSMB8) from Canis lupus familiaris (Dog).